Here is a 190-residue protein sequence, read N- to C-terminus: Translation initiation factor IF-3 (190 aa).

It belongs to the IF-3 family. As to quaternary structure, monomer.

Its subcellular location is the cytoplasm. IF-3 binds to the 30S ribosomal subunit and shifts the equilibrium between 70S ribosomes and their 50S and 30S subunits in favor of the free subunits, thus enhancing the availability of 30S subunits on which protein synthesis initiation begins. The chain is Translation initiation factor IF-3 from Prochlorococcus marinus (strain MIT 9312).